The following is a 949-amino-acid chain: Protein translocase subunit SecA (949 aa).

ATP is bound by residues Gln87, 105–109 (GEGKT), and Asp524. Disordered regions lie at residues 852 to 876 (PPPG…SSGG) and 896 to 939 (LEFS…GSGK). Zn(2+) is bound by residues Cys933, Cys935, Cys944, and His945.

The protein belongs to the SecA family. Monomer and homodimer. Part of the essential Sec protein translocation apparatus which comprises SecA, SecYEG and auxiliary proteins SecDF-YajC and YidC. Requires Zn(2+) as cofactor.

The protein localises to the cell inner membrane. It is found in the cytoplasm. It catalyses the reaction ATP + H2O + cellular proteinSide 1 = ADP + phosphate + cellular proteinSide 2.. Part of the Sec protein translocase complex. Interacts with the SecYEG preprotein conducting channel. Has a central role in coupling the hydrolysis of ATP to the transfer of proteins into and across the cell membrane, serving both as a receptor for the preprotein-SecB complex and as an ATP-driven molecular motor driving the stepwise translocation of polypeptide chains across the membrane. In Methylocella silvestris (strain DSM 15510 / CIP 108128 / LMG 27833 / NCIMB 13906 / BL2), this protein is Protein translocase subunit SecA.